The sequence spans 658 residues: Putative endo-beta-N-acetylglucosaminidase (658 aa).

The N-terminal stretch at 1–23 (MKKVRFIFLALLFFLASPEGAMA) is a signal peptide. 13 Cell wall-binding repeats span residues 42-63 (ANEW…DANY), 65-84 (ENEW…GGYM), 86-105 (KSEW…DGKM), 124-145 (IEDW…DGQH), 147-166 (EKEW…GGYL), 185-206 (QQGW…NGNY), 208-227 (DKEW…GGYM), 229-248 (ANEW…DGKM), 250-271 (EKEW…GGYM), 273-292 (ANEW…DGKI), 294-315 (EKEW…GGYM), 317-336 (ANEW…DGKI), and 338-359 (EKEW…GGYM).

The protein belongs to the glycosyl hydrolase 73 family.

The protein resides in the secreted. It carries out the reaction an N(4)-(oligosaccharide-(1-&gt;3)-[oligosaccharide-(1-&gt;6)]-beta-D-Man-(1-&gt;4)-beta-D-GlcNAc-(1-&gt;4)-alpha-D-GlcNAc)-L-asparaginyl-[protein] + H2O = an oligosaccharide-(1-&gt;3)-[oligosaccharide-(1-&gt;6)]-beta-D-Man-(1-&gt;4)-D-GlcNAc + N(4)-(N-acetyl-beta-D-glucosaminyl)-L-asparaginyl-[protein]. Plays an important role in cell wall degradation and cell separation. This is Putative endo-beta-N-acetylglucosaminidase (lytB) from Streptococcus pneumoniae serotype 4 (strain ATCC BAA-334 / TIGR4).